Consider the following 90-residue polypeptide: Exodeoxyribonuclease 7 small subunit (90 aa).

The disordered stretch occupies residues glutamine 62–alanine 90. Positions glycine 64 to histidine 74 are enriched in polar residues. Residues tyrosine 79–alanine 90 show a composition bias toward acidic residues.

This sequence belongs to the XseB family. In terms of assembly, heterooligomer composed of large and small subunits.

The protein localises to the cytoplasm. The catalysed reaction is Exonucleolytic cleavage in either 5'- to 3'- or 3'- to 5'-direction to yield nucleoside 5'-phosphates.. Functionally, bidirectionally degrades single-stranded DNA into large acid-insoluble oligonucleotides, which are then degraded further into small acid-soluble oligonucleotides. This is Exodeoxyribonuclease 7 small subunit from Desulfovibrio desulfuricans (strain ATCC 27774 / DSM 6949 / MB).